The following is a 257-amino-acid chain: Imidazole glycerol phosphate synthase subunit HisF (257 aa).

Catalysis depends on residues Asp-11 and Asp-130.

This sequence belongs to the HisA/HisF family. In terms of assembly, heterodimer of HisH and HisF.

It localises to the cytoplasm. The enzyme catalyses 5-[(5-phospho-1-deoxy-D-ribulos-1-ylimino)methylamino]-1-(5-phospho-beta-D-ribosyl)imidazole-4-carboxamide + L-glutamine = D-erythro-1-(imidazol-4-yl)glycerol 3-phosphate + 5-amino-1-(5-phospho-beta-D-ribosyl)imidazole-4-carboxamide + L-glutamate + H(+). Its pathway is amino-acid biosynthesis; L-histidine biosynthesis; L-histidine from 5-phospho-alpha-D-ribose 1-diphosphate: step 5/9. Its function is as follows. IGPS catalyzes the conversion of PRFAR and glutamine to IGP, AICAR and glutamate. The HisF subunit catalyzes the cyclization activity that produces IGP and AICAR from PRFAR using the ammonia provided by the HisH subunit. The polypeptide is Imidazole glycerol phosphate synthase subunit HisF (Actinobacillus succinogenes (strain ATCC 55618 / DSM 22257 / CCUG 43843 / 130Z)).